Here is a 26-residue protein sequence, read N- to C-terminus: uncharacterized protein (26 aa).

This is an uncharacterized protein from Escherichia coli (strain K12).